The chain runs to 92 residues: uncharacterized protein (92 aa).

The segment covering 1–10 has biased composition (basic and acidic residues); that stretch reads MGLLKKKDST. The interval 1–21 is disordered; it reads MGLLKKKDSTSARSSTSPCAD. Residues 16-66 form the CHCH domain; sequence TSPCADLRNAYHNCFNKWYSEKFVKGQWDKEECVAEWKKYRDCLSENLDGK. Short sequence motifs (cx9C motif) lie at residues 19-29 and 48-58; these read CADLRNAYHNC and CVAEWKKYRDC. Cystine bridges form between Cys19–Cys58 and Cys29–Cys48.

The protein belongs to the TRIAP1/MDM35 family.

This is an uncharacterized protein from Arabidopsis thaliana (Mouse-ear cress).